A 928-amino-acid chain; its full sequence is Type II inositol 3,4-bisphosphate 4-phosphatase (928 aa).

The segment covering 1–13 has biased composition (basic and acidic residues); the sequence is MEIKEEGTSEEGQ. 3 disordered regions span residues 1–23, 481–516, and 548–575; these read MEIK…QAND, ILRK…HHSD, and SRND…LTSH. In terms of domain architecture, C2 spans 23-165; that stretch reads DPEDIQFTSI…LKSKEQLLSL (143 aa). Composition is skewed to basic and acidic residues over residues 506–516 and 548–563; these read RRQDSIPHHSD and SRND…KDGD.

It belongs to the inositol 3,4-bisphosphate 4-phosphatase family.

It catalyses the reaction a 1,2-diacyl-sn-glycero-3-phospho-(1D-myo-inositol-3,4-bisphosphate) + H2O = a 1,2-diacyl-sn-glycero-3-phospho-(1D-myo-inositol-3-phosphate) + phosphate. The enzyme catalyses 1D-myo-inositol 3,4-bisphosphate + H2O = 1D-myo-inositol 3-phosphate + phosphate. The catalysed reaction is 1D-myo-inositol 1,3,4-trisphosphate + H2O = 1D-myo-inositol 1,3-bisphosphate + phosphate. It participates in signal transduction; phosphatidylinositol signaling pathway. Strongly inhibited by inositol hexakisphosphate. In terms of biological role, catalyzes the hydrolysis of the 4-position phosphate of phosphatidylinositol 3,4-bisphosphate, inositol 1,3,4-trisphosphate and inositol 3,4-bisphosphate. Plays a role in the late stages of macropinocytosis by dephosphorylating phosphatidylinositol 3,4-bisphosphate in membrane ruffles. The lipid phosphatase activity is critical for tumor suppressor function. Antagonizes the PI3K-AKT/PKB signaling pathway by dephosphorylating phosphoinositides and thereby modulating cell cycle progression and cell survival. In Rattus norvegicus (Rat), this protein is Type II inositol 3,4-bisphosphate 4-phosphatase (Inpp4b).